The primary structure comprises 149 residues: MERTFLMIKPDAVQRNLIGEIISRIEKKGLKLVGGKFMQVPMELAEKHYSEHEGKPFYDKLISFITSAPVFAMVVEGENAVAVSRKIIGSTNPSEAAPGTIRGDYGLNLGRNIIHGSDSTESAQREVKLWFTSSEIADYKEPREDWLYE.

The ATP site is built by Lys9, Phe57, Arg85, Thr91, Arg102, and Asn112. Residue His115 is the Pros-phosphohistidine intermediate of the active site.

Belongs to the NDK family. In terms of assembly, homotetramer. Mg(2+) is required as a cofactor.

The protein localises to the cytoplasm. It carries out the reaction a 2'-deoxyribonucleoside 5'-diphosphate + ATP = a 2'-deoxyribonucleoside 5'-triphosphate + ADP. The enzyme catalyses a ribonucleoside 5'-diphosphate + ATP = a ribonucleoside 5'-triphosphate + ADP. Its function is as follows. Major role in the synthesis of nucleoside triphosphates other than ATP. The ATP gamma phosphate is transferred to the NDP beta phosphate via a ping-pong mechanism, using a phosphorylated active-site intermediate. The polypeptide is Nucleoside diphosphate kinase (Staphylococcus epidermidis (strain ATCC 35984 / DSM 28319 / BCRC 17069 / CCUG 31568 / BM 3577 / RP62A)).